We begin with the raw amino-acid sequence, 431 residues long: TDP-daunosamine transferase DnrS (431 aa).

The first 23 residues, 1-23, serve as a signal peptide directing secretion; it reads MKVLVTAFAMDAHFNGVVPLAWA.

It belongs to the glycosyltransferase 28 family.

The enzyme catalyses dTDP-beta-L-daunosamine + epsilon-rhodomycinone = rhodomycin D + dTDP + H(+). The protein operates within antibiotic biosynthesis; daunorubicin biosynthesis. It participates in antibiotic biosynthesis; carminomycin biosynthesis. Involved in the biosynthesis of the anthracyclines carminomycin and daunorubicin (daunomycin) which are aromatic polyketide antibiotics that exhibit high cytotoxicity and are widely applied in the chemotherapy of a variety of cancers. Catalyzes the addition of the TDP activated glycoside, L-daunosamine-TDP (2,3,6-trideoxy-3-aminohexose-TDP) at position C-7 of epsilon-rhodomycinone to yield rhodomycin D. Glycosylation is a prerequisite for biological activity of anthracyclines and requires DnrQ which seems to act as an activator. The sequence is that of TDP-daunosamine transferase DnrS (dnrS) from Streptomyces peucetius.